The chain runs to 732 residues: Small conductance calcium-activated potassium channel protein 3 (732 aa).

Over residues 1 to 11 (MDTSGHFHDSG) the composition is skewed to basic and acidic residues. Disordered regions lie at residues 1 to 82 (MDTS…QQAP) and 103 to 162 (HSSP…ASPL). Residues 35–59 (QPPPPSAPPAVPQQPPGPLLQPQPP) show a composition bias toward pro residues. The span at 60–82 (QLQQQQQQQQQQQQQQQQQQQAP) shows a compositional bias: low complexity. Residues 113–133 (NSANSTAILHPSSRQGSQLNL) show a composition bias toward polar residues. Residues 139-148 (GHSPSSTATS) show a composition bias toward low complexity. A Phosphoserine modification is found at serine 168. Residues 241–257 (THNHQHAGTTAGSTTFP) show a composition bias toward polar residues. The interval 241 to 260 (THNHQHAGTTAGSTTFPKAN) is disordered. Residues 289 to 309 (LIFGMFGIVVMVIETELSWGL) form a helical membrane-spanning segment. Residues 316–336 (FSLALKCLISLSTIILLGLII) form a helical membrane-spanning segment. A helical transmembrane segment spans residues 367–387 (ISLEMLVCAIHPIPGEYKFFW). The chain crosses the membrane as a helical span at residues 406–426 (IILSIPMFLRLYLIARVMLLH). Residues 455–475 (LMTICPGTVLLVFSISLWIIA) traverse the membrane as a helical segment. Residues 495-515 (FLGAMWLISITFLSIGYGDMV) constitute an intramembrane region (pore-forming). Residues 524 to 544 (VCLLTGIMGAGCTALVVAVVA) form a helical membrane-spanning segment. The tract at residues 562–638 (DTQLTKRIKN…LVDLSKMQNV (77 aa)) is calmodulin-binding. The stretch at 643–670 (ITELNDRSEDLEKQIGSLESKLEHLTAS) forms a coiled coil. The segment at 704-732 (GTSHAPPSDSPIGISSTSFPTPYTSSSSC) is disordered. Over residues 718–732 (SSTSFPTPYTSSSSC) the composition is skewed to low complexity.

Belongs to the potassium channel KCNN family. KCa2.3/KCNN3 subfamily. Homodimer. Heteromultimer with KCNN2 or KCNN1; this modulates plasma membrane expression and consequently the small conductance calcium-activated potassium channel activity. The complex is composed of 4 channel subunits each of which binds to a calmodulin subunit which regulates the channel activity through calcium-binding. Interacts with CALM1.

The protein resides in the cell membrane. The protein localises to the cytoplasm. It is found in the myofibril. Its subcellular location is the sarcomere. It localises to the z line. It catalyses the reaction K(+)(in) = K(+)(out). Inhibited by bee venom neurotoxin apamin. Small conductance calcium-activated potassium channel that mediates the voltage-independent transmembrane transfer of potassium across the cell membrane through a constitutive interaction with calmodulin which binds the intracellular calcium allowing its opening. The current is characterized by a voltage-independent activation, an intracellular calcium concentration increase-dependent activation and a single-channel conductance of 10 picosiemens. Also presents an inwardly rectifying current, thus reducing its already small outward conductance of potassium ions, which is particularly the case when the membrane potential displays positive values, above + 20 mV. Activation is followed by membrane hyperpolarization. Thought to regulate neuronal excitability by contributing to the slow component of synaptic afterhyperpolarization. The chain is Small conductance calcium-activated potassium channel protein 3 from Rattus norvegicus (Rat).